The chain runs to 451 residues: Chaperone SurA (451 aa).

The signal sequence occupies residues 1 to 26; it reads MKKIIPTNLFKLISILFILTPFFAWS. 2 consecutive PpiC domains span residues 179–280 and 290–388; these read DVEY…QLQG and KQYH…FLDG.

It localises to the periplasm. It catalyses the reaction [protein]-peptidylproline (omega=180) = [protein]-peptidylproline (omega=0). In terms of biological role, chaperone involved in the correct folding and assembly of outer membrane proteins. Recognizes specific patterns of aromatic residues and the orientation of their side chains, which are found more frequently in integral outer membrane proteins. May act in both early periplasmic and late outer membrane-associated steps of protein maturation. In Hydrogenovibrio crunogenus (strain DSM 25203 / XCL-2) (Thiomicrospira crunogena), this protein is Chaperone SurA.